Consider the following 135-residue polypeptide: Ribosome-binding factor A (135 aa).

Belongs to the RbfA family. As to quaternary structure, monomer. Binds 30S ribosomal subunits, but not 50S ribosomal subunits or 70S ribosomes.

It is found in the cytoplasm. Its function is as follows. One of several proteins that assist in the late maturation steps of the functional core of the 30S ribosomal subunit. Associates with free 30S ribosomal subunits (but not with 30S subunits that are part of 70S ribosomes or polysomes). Required for efficient processing of 16S rRNA. May interact with the 5'-terminal helix region of 16S rRNA. This chain is Ribosome-binding factor A, found in Aliivibrio fischeri (strain MJ11) (Vibrio fischeri).